We begin with the raw amino-acid sequence, 374 residues long: Chaperone protein DnaJ (374 aa).

The region spanning 5 to 69 (DYYEVLGVSK…DKKAKYDQFG (65 aa)) is the J domain. The CR-type zinc finger occupies 141-223 (GVNKKTILNL…CHGKGVESKR (83 aa)). Zn(2+) is bound by residues cysteine 154, cysteine 157, cysteine 171, cysteine 174, cysteine 197, cysteine 200, cysteine 211, and cysteine 214. 4 CXXCXGXG motif repeats span residues 154-161 (CTKCDGVG), 171-178 (CTKCNGAG), 197-204 (CDKCNGVG), and 211-218 (CKNCHGKG).

It belongs to the DnaJ family. In terms of assembly, homodimer. The cofactor is Zn(2+).

Its subcellular location is the cytoplasm. Participates actively in the response to hyperosmotic and heat shock by preventing the aggregation of stress-denatured proteins and by disaggregating proteins, also in an autonomous, DnaK-independent fashion. Unfolded proteins bind initially to DnaJ; upon interaction with the DnaJ-bound protein, DnaK hydrolyzes its bound ATP, resulting in the formation of a stable complex. GrpE releases ADP from DnaK; ATP binding to DnaK triggers the release of the substrate protein, thus completing the reaction cycle. Several rounds of ATP-dependent interactions between DnaJ, DnaK and GrpE are required for fully efficient folding. Also involved, together with DnaK and GrpE, in the DNA replication of plasmids through activation of initiation proteins. This chain is Chaperone protein DnaJ, found in Mesoplasma florum (strain ATCC 33453 / NBRC 100688 / NCTC 11704 / L1) (Acholeplasma florum).